The chain runs to 210 residues: Large ribosomal subunit protein bL25 (210 aa).

Residues 191–200 (EAPAEGAAAP) are compositionally biased toward low complexity. Residues 191–210 (EAPAEGAAAPAPAPAKKGKK) form a disordered region.

This sequence belongs to the bacterial ribosomal protein bL25 family. CTC subfamily. Part of the 50S ribosomal subunit; part of the 5S rRNA/L5/L18/L25 subcomplex. Contacts the 5S rRNA. Binds to the 5S rRNA independently of L5 and L18.

Functionally, this is one of the proteins that binds to the 5S RNA in the ribosome where it forms part of the central protuberance. This is Large ribosomal subunit protein bL25 from Paracidovorax citrulli (strain AAC00-1) (Acidovorax citrulli).